Reading from the N-terminus, the 88-residue chain is Putative defensin-like protein 256 (88 aa).

The first 25 residues, 1–25 (MKSSIFFKLLLLVSLLVVIFRQSYA), serve as a signal peptide directing secretion. Disulfide bonds link Cys30–Cys46, Cys36–Cys53, and Cys40–Cys55.

Belongs to the DEFL family.

It is found in the secreted. The chain is Putative defensin-like protein 256 from Arabidopsis thaliana (Mouse-ear cress).